Reading from the N-terminus, the 4568-residue chain is Dynein heavy chain, cytoplasmic (4568 aa).

Residues 1 to 1826 are stem; that stretch reads MDSGNESSII…VVKMANSQFF (1826 aa). Coiled-coil stretches lie at residues 587–652, 814–844, 1241–1274, 1324–1340, and 1559–1591; these read QTRL…VLGK, KLAE…NVLK, QEAL…LDLS, RKIR…LKQL, and VNMQ…RERS. AAA regions lie at residues 1827-2049, 2118-2394, 2498-2747, and 2842-3111; these read YGFE…VLVS, QQLS…PTPQ, EIES…WVRG, and GFYE…GHRV. ATP-binding positions include 1865–1872, 2163–2170, 2537–2544, and 2880–2887; these read GPAGTGKT, GSSGSGKT, GPPGSGKT, and GTAGAGKT. Coiled-coil stretches lie at residues 3132–3229, 3339–3432, and 3707–3739; these read EKRS…AQVE, ARAQ…RDRW, and NSVI…EVDA. The stalk stretch occupies residues 3132-3432; sequence EKRSDLEEEK…SSLRSERDRW (301 aa). AAA stretches follow at residues 3496 to 3725 and 3954 to 4169; these read LSTV…EVAQ and AHRV…TLDA. Positions 4359 to 4386 form a coiled coil; sequence QLLKDIRRDLNEISAVCRAEKKQNNETR.

It belongs to the dynein heavy chain family. Consists of at least two heavy chains and a number of intermediate and light chains.

It is found in the cytoplasm. It localises to the cytoskeleton. In terms of biological role, cytoplasmic dynein acts as a motor for the intracellular retrograde motility of vesicles and organelles along microtubules. Dynein has ATPase activity; the force-producing power stroke is thought to occur on release of ADP. May play a role in nuclear migration in hypodermal precursor cells. May be involved in the transport of synaptic vesicle components towards the axon of the DA motor neuron. This function may involve the regulation of dynein by pct-1 and/or cdk-5. Involved in the formation of synapses in the dorsal region during synaptic remodeling of DD motor neurons. Required for anterograde trafficking of dense-core vesicles in the DB motor neuron dendrites. Required for the formation of dendritic branches of PVD sensory neurons. May also play a role in GABAergic synaptic vesicle localization in the ventral nerve cord. May play a role in the pairing of homologous chromosomes during meiosis. This Caenorhabditis elegans protein is Dynein heavy chain, cytoplasmic.